A 162-amino-acid polypeptide reads, in one-letter code: Caveolin-2 (162 aa).

Residues 1 to 86 (MGLETEKADV…FEISKYVIYK (86 aa)) are Cytoplasmic-facing. Tyr-19 bears the Phosphotyrosine; by SRC mark. 2 positions are modified to phosphoserine: Ser-20 and Ser-23. At Tyr-27 the chain carries Phosphotyrosine; by SRC. Residue Ser-36 is modified to Phosphoserine. The helical intramembrane region spans 87 to 107 (FLTVFLAIPLAFAAGIIFATL). The Cytoplasmic portion of the chain corresponds to 108 to 162 (SCLHIWIIMPFVKTCLMVLPSVQTIWRSVTDAVIAPLCTSVGRVFSSVSLQLSRD).

It belongs to the caveolin family. Monomer or homodimer. Interacts with CAV1; the interaction forms a stable heterooligomeric complex that is required for targeting to lipid rafts and for caveolae formation. Tyrosine phosphorylated forms do not form heterooligomers with the Tyr-19-phosphorylated form existing as a monomer or dimer, and the Tyr-27-form as a monomer only. Interacts (tyrosine phosphorylated form) with the SH2 domain-containing proteins, RASA1, NCK1 and SRC. Interacts (tyrosine phosphorylated form) with INSR, the interaction (Tyr-27-phosphorylated form) is increased on insulin stimulation. Interacts (Tyr-19 phosphorylated form) with MAPK1 (phosphorylated form); the interaction, promoted by insulin, leads to nuclear location and MAPK1 activation. Interacts with STAT3; the interaction is increased on insulin-induced tyrosine phosphorylation leading to STAT activation. Post-translationally, phosphorylated on serine and tyrosine residues. CAV1 promotes phosphorylation on Ser-23 which then targets the complex to the plasma membrane, lipid rafts and caveolae. Phosphorylation on Ser-36 appears to modulate mitosis in endothelial cells. Phosphorylation on both Tyr-19 and Tyr-27 is required for insulin-induced 'Ser-727' phosphorylation of STAT3 and its activation. Phosphorylation on Tyr-19 is required for insulin-induced phosphorylation of MAPK1 and DNA binding of STAT3. Tyrosine phosphorylation is induced by both EGF and insulin (By. similarity).

The protein localises to the nucleus. Its subcellular location is the cytoplasm. It is found in the golgi apparatus membrane. The protein resides in the cell membrane. It localises to the membrane. The protein localises to the caveola. In terms of biological role, may act as a scaffolding protein within caveolar membranes. Interacts directly with G-protein alpha subunits and can functionally regulate their activity. Acts as an accessory protein in conjunction with CAV1 in targeting to lipid rafts and driving caveolae formation. The Ser-36 phosphorylated form has a role in modulating mitosis in endothelial cells. Positive regulator of cellular mitogenesis of the MAPK signaling pathway. Required for the insulin-stimulated nuclear translocation and activation of MAPK1 and STAT3, and the subsequent regulation of cell cycle progression. This chain is Caveolin-2 (CAV2), found in Carollia perspicillata (Seba's short-tailed bat).